The following is a 205-amino-acid chain: Histone H1, early embryonic (205 aa).

2 disordered regions span residues Met-1 to Ala-21 and Ala-94 to Lys-205. Residues Ala-17–Val-91 enclose the H15 domain. Positions Ala-98 to Ser-124 are enriched in basic and acidic residues. Basic residues-rich tracts occupy residues Pro-135 to Lys-150 and Glu-157 to Lys-205.

This sequence belongs to the histone H1/H5 family.

It localises to the nucleus. The protein resides in the chromosome. In terms of biological role, histones H1 are necessary for the condensation of nucleosome chains into higher-order structures. The sequence is that of Histone H1, early embryonic from Strongylocentrotus purpuratus (Purple sea urchin).